A 353-amino-acid chain; its full sequence is Photosystem II protein D1 (353 aa).

At Thr2 the chain carries N-acetylthreonine. Position 2 is a phosphothreonine (Thr2). A run of 3 helical transmembrane segments spans residues 29-46 (YIGWFGVLMIPTLLTATS), 118-133 (HFLLGVACYMGREWEL), and 142-156 (WIAVAYSAPVAAATA). A chlorophyll a-binding site is contributed by His118. A pheophytin a-binding site is contributed by Tyr126. The [CaMn4O5] cluster site is built by Asp170 and Glu189. The helical transmembrane segment at 197–218 (FHMLGVAGVFGGSLFSAMHGSL) threads the bilayer. His198 provides a ligand contact to chlorophyll a. Residues His215 and 264-265 (SF) contribute to the a quinone site. Position 215 (His215) interacts with Fe cation. His272 lines the Fe cation pocket. Residues 274–288 (FLAAWPVVGIWFTAL) traverse the membrane as a helical segment. Residues His332, Glu333, Asp342, and Ala344 each coordinate [CaMn4O5] cluster. Positions 345 to 353 (GVEVPSTNG) are excised as a propeptide.

The protein belongs to the reaction center PufL/M/PsbA/D family. PSII is composed of 1 copy each of membrane proteins PsbA, PsbB, PsbC, PsbD, PsbE, PsbF, PsbH, PsbI, PsbJ, PsbK, PsbL, PsbM, PsbT, PsbX, PsbY, PsbZ, Psb30/Ycf12, at least 3 peripheral proteins of the oxygen-evolving complex and a large number of cofactors. It forms dimeric complexes. It depends on The D1/D2 heterodimer binds P680, chlorophylls that are the primary electron donor of PSII, and subsequent electron acceptors. It shares a non-heme iron and each subunit binds pheophytin, quinone, additional chlorophylls, carotenoids and lipids. D1 provides most of the ligands for the Mn4-Ca-O5 cluster of the oxygen-evolving complex (OEC). There is also a Cl(-1) ion associated with D1 and D2, which is required for oxygen evolution. The PSII complex binds additional chlorophylls, carotenoids and specific lipids. as a cofactor. In terms of processing, tyr-161 forms a radical intermediate that is referred to as redox-active TyrZ, YZ or Y-Z. C-terminally processed by CTPA; processing is essential to allow assembly of the oxygen-evolving complex and thus photosynthetic growth.

The protein resides in the plastid. The protein localises to the chloroplast thylakoid membrane. It catalyses the reaction 2 a plastoquinone + 4 hnu + 2 H2O = 2 a plastoquinol + O2. Photosystem II (PSII) is a light-driven water:plastoquinone oxidoreductase that uses light energy to abstract electrons from H(2)O, generating O(2) and a proton gradient subsequently used for ATP formation. It consists of a core antenna complex that captures photons, and an electron transfer chain that converts photonic excitation into a charge separation. The D1/D2 (PsbA/PsbD) reaction center heterodimer binds P680, the primary electron donor of PSII as well as several subsequent electron acceptors. The protein is Photosystem II protein D1 of Morus indica (Mulberry).